Consider the following 701-residue polypeptide: Elongation factor G (701 aa).

Residues 11–287 (TKVRNIGIMA…AVIDYLPSPL (277 aa)) form the tr-type G domain. Residues 20–27 (AHIDAGKT), 84–88 (DTPGH), and 138–141 (NKMD) each bind GTP.

This sequence belongs to the TRAFAC class translation factor GTPase superfamily. Classic translation factor GTPase family. EF-G/EF-2 subfamily.

Its subcellular location is the cytoplasm. In terms of biological role, catalyzes the GTP-dependent ribosomal translocation step during translation elongation. During this step, the ribosome changes from the pre-translocational (PRE) to the post-translocational (POST) state as the newly formed A-site-bound peptidyl-tRNA and P-site-bound deacylated tRNA move to the P and E sites, respectively. Catalyzes the coordinated movement of the two tRNA molecules, the mRNA and conformational changes in the ribosome. The protein is Elongation factor G of Mycobacterium leprae (strain Br4923).